The chain runs to 247 residues: ATP synthase subunit a (247 aa).

6 consecutive transmembrane segments (helical) span residues 24 to 44, 82 to 102, 112 to 132, 141 to 161, 194 to 214, and 219 to 239; these read IAFT…SLLM, FFPF…VGIV, IIVT…YGFY, LFVP…IEVI, MLGA…ALVV, and LELL…CIYI.

Belongs to the ATPase A chain family. As to quaternary structure, F-type ATPases have 2 components, CF(1) - the catalytic core - and CF(0) - the membrane proton channel. CF(1) has five subunits: alpha(3), beta(3), gamma(1), delta(1), epsilon(1). CF(0) has three main subunits: a(1), b(2) and c(9-12). The alpha and beta chains form an alternating ring which encloses part of the gamma chain. CF(1) is attached to CF(0) by a central stalk formed by the gamma and epsilon chains, while a peripheral stalk is formed by the delta and b chains.

The protein localises to the cell inner membrane. Its function is as follows. Key component of the proton channel; it plays a direct role in the translocation of protons across the membrane. The sequence is that of ATP synthase subunit a from Nitrobacter hamburgensis (strain DSM 10229 / NCIMB 13809 / X14).